Reading from the N-terminus, the 523-residue chain is MSQQVIIFDTTLRDGEQALQASLSVKEKLQIALALERMGVDVMEVGFPVSSPGDFESVQTIARQVKNSRVCALARCVEKDIDVAAESLKVADAFRIHTFIATSPMHIATKLRSTLDEVIERAIYMVKRARNYTDDVEFSCEDAGRTPIDDLARVVEAAINAGAKTINIPDTVGYTMPFEFGGIISGLYERVPNIDKAIISVHTHDDLGLGVGNALAAVHAGARQVEGAMNGIGERAGNCSLEEVIMAIKVRQDILNVHTRINHQEIWRTSQLVSQICNMPIPANKAIVGSGAFAHSSGIHQDGVLKNRENYEIMTPESIGLNQIQLNLTSRSGRAAVKHRMDEMGYKESEYNLDNLYDAFLKLADKKGQVFDYDLEALAFINKQQEEPEHFRLDYFSVQSGSNDIATASVKLACGDDIKAEAANGNGPVDAIYQAINRITDYNIELVKYSLSAKGHGKDALGQVDIVANYNGRRFHGVGLATDIVESSAKAMVHVLNNIWRAAEVEKELQRKAQNKENNKETV.

Residues 5-267 enclose the Pyruvate carboxyltransferase domain; sequence VIIFDTTLRD…HTRINHQEIW (263 aa). Residues aspartate 14, histidine 202, histidine 204, and asparagine 238 each coordinate Mn(2+). A regulatory domain region spans residues 392–523; that stretch reads RLDYFSVQSG…QNKENNKETV (132 aa).

This sequence belongs to the alpha-IPM synthase/homocitrate synthase family. LeuA type 1 subfamily. As to quaternary structure, homodimer. Mn(2+) serves as cofactor.

It localises to the cytoplasm. It catalyses the reaction 3-methyl-2-oxobutanoate + acetyl-CoA + H2O = (2S)-2-isopropylmalate + CoA + H(+). It participates in amino-acid biosynthesis; L-leucine biosynthesis; L-leucine from 3-methyl-2-oxobutanoate: step 1/4. Functionally, catalyzes the condensation of the acetyl group of acetyl-CoA with 3-methyl-2-oxobutanoate (2-ketoisovalerate) to form 3-carboxy-3-hydroxy-4-methylpentanoate (2-isopropylmalate). The sequence is that of 2-isopropylmalate synthase from Citrobacter koseri (strain ATCC BAA-895 / CDC 4225-83 / SGSC4696).